The following is a 395-amino-acid chain: Ribosomal RNA small subunit methyltransferase H (395 aa).

Residues glycine 101–histidine 103, aspartate 120, tyrosine 147, aspartate 171, and glutamine 178 each bind S-adenosyl-L-methionine.

This sequence belongs to the methyltransferase superfamily. RsmH family.

It localises to the cytoplasm. The enzyme catalyses cytidine(1402) in 16S rRNA + S-adenosyl-L-methionine = N(4)-methylcytidine(1402) in 16S rRNA + S-adenosyl-L-homocysteine + H(+). In terms of biological role, specifically methylates the N4 position of cytidine in position 1402 (C1402) of 16S rRNA. The sequence is that of Ribosomal RNA small subunit methyltransferase H from Mycobacterium ulcerans (strain Agy99).